A 103-amino-acid chain; its full sequence is Putative double-stranded DNA mimic protein HAPS_1002 (103 aa).

The protein belongs to the putative dsDNA mimic protein family.

In terms of biological role, may act as a double-stranded DNA (dsDNA) mimic. Probably regulates the activity of a dsDNA-binding protein. This is Putative double-stranded DNA mimic protein HAPS_1002 from Glaesserella parasuis serovar 5 (strain SH0165) (Haemophilus parasuis).